An 888-amino-acid chain; its full sequence is 3-hydroxy-3-methylglutaryl-coenzyme A reductase (888 aa).

Over Met-1–His-9 the chain is Cytoplasmic. Residues Gly-10–Gly-39 traverse the membrane as a helical segment. Residues Asn-40–Asp-56 are Lumenal-facing. A helical transmembrane segment spans residues Val-57 to Phe-78. Residues Asp-61–Leu-218 form the SSD domain. Residues Tyr-75–Phe-78 carry the INSIG-binding motif motif. Over Gln-79–Lys-89 the chain is Cytoplasmic. Residue Lys-89 forms a Glycyl lysine isopeptide (Lys-Gly) (interchain with G-Cter in ubiquitin) linkage. Residues Tyr-90 to Leu-114 form a helical membrane-spanning segment. Over Asp-115–Glu-123 the chain is Lumenal. The chain crosses the membrane as a helical span at residues Ala-124–Ser-149. Topologically, residues Gln-150–Arg-159 are cytoplasmic. The helical transmembrane segment at Gly-160 to Val-187 threads the bilayer. At Arg-188–Glu-191 the chain is on the lumenal side. A helical membrane pass occupies residues Ile-192–Leu-220. The Cytoplasmic segment spans residues Glu-221 to Lys-248. Residue Lys-248 forms a Glycyl lysine isopeptide (Lys-Gly) (interchain with G-Cter in ubiquitin) linkage. Residues Pro-249–Ala-275 form a helical membrane-spanning segment. At Asp-276–Lys-314 the chain is on the lumenal side. Asn-281 and Asn-296 each carry an N-linked (GlcNAc...) asparagine glycan. Residues Met-315–Phe-339 traverse the membrane as a helical segment. Residues Glu-340 to Ala-888 are Cytoplasmic-facing. Residues Glu-559, Lys-691, and Asp-767 each act as charge relay system in the active site. His-866 acts as the Proton donor in catalysis. The residue at position 872 (Ser-872) is a Phosphoserine; by AMPK.

It belongs to the HMG-CoA reductase family. In terms of assembly, homotetramer. Homodimer. Interacts (via its SSD) with INSIG1; the interaction, accelerated by sterols, leads to the recruitment of HMGCR to AMFR/gp78 for its ubiquitination by the sterol-mediated ERAD pathway. Interacts with UBIAD1. Post-translationally, undergoes sterol-mediated ubiquitination and ER-associated degradation (ERAD). Accumulation of sterols in the endoplasmic reticulum (ER) membrane, triggers binding of the reductase to the ER membrane protein INSIG1 or INSIG2. The INSIG1 binding leads to the recruitment of the ubiquitin ligase, AMFR/gp78, RNF139 or RNF145, initiating ubiquitination of the reductase. The ubiquitinated reductase is then extracted from the ER membrane and delivered to cytosolic 26S proteosomes by a mechanism probably mediated by the ATPase Valosin-containing protein VCP/p97. The INSIG2-binding leads to the recruitment of the ubiquitin ligase RNF139, initiating ubiquitination of the reductase. Lys-248 is the main site of ubiquitination. Ubiquitination is enhanced by the presence of a geranylgeranylated protein. In terms of processing, N-glycosylated. Deglycosylated by NGLY1 on release from the endoplasmic reticulum (ER) in a sterol-mediated manner. Phosphorylated. Phosphorylation at Ser-872 reduces the catalytic activity.

The protein localises to the endoplasmic reticulum membrane. The protein resides in the peroxisome membrane. The catalysed reaction is (R)-mevalonate + 2 NADP(+) + CoA = (3S)-3-hydroxy-3-methylglutaryl-CoA + 2 NADPH + 2 H(+). It functions in the pathway metabolic intermediate biosynthesis; (R)-mevalonate biosynthesis; (R)-mevalonate from acetyl-CoA: step 3/3. With respect to regulation, regulated by a negative feedback mechanism through sterols and non-sterol metabolites derived from mevalonate. Phosphorylation at Ser-872 down-regulates the catalytic activity. Catalyzes the conversion of (3S)-hydroxy-3-methylglutaryl-CoA (HMG-CoA) to mevalonic acid, the rate-limiting step in the synthesis of cholesterol and other isoprenoids, thus plays a critical role in cellular cholesterol homeostasis. This is 3-hydroxy-3-methylglutaryl-coenzyme A reductase (HMGCR) from Pongo abelii (Sumatran orangutan).